The sequence spans 348 residues: Propane 2-monooxygenase, reductase component (348 aa).

Residues His5–Asp95 enclose the 2Fe-2S ferredoxin-type domain. Residues Cys39, Cys44, Cys47, and Cys79 each coordinate [2Fe-2S] cluster. The region spanning Ile105–Lys206 is the FAD-binding FR-type domain.

It belongs to the bacterial ring-hydroxylating dioxygenase ferredoxin reductase family. As to quaternary structure, the propane 2-monooxygenase multicomponent enzyme system is composed of an electron transfer component and a monooxygenase component interacting with the effector protein MimD. The electron transfer component is composed of a reductase (MimB), and the monooxygenase component is formed by a large subunit (MimA) and a small subunit (MimC). FAD serves as cofactor. It depends on [2Fe-2S] cluster as a cofactor.

Functionally, reductase component of the propane 2-monooxygenase multicomponent enzyme system which is involved in the degradation of propane via the O2-dependent hydroxylation of propane. Reductase catalyzes the transfer of electrons from NADH or NADPH to monooxygenase. This chain is Propane 2-monooxygenase, reductase component, found in Mycolicibacterium goodii (Mycobacterium goodii).